We begin with the raw amino-acid sequence, 422 residues long: Mannose-1-phosphate guanylyltransferase regulatory subunit alpha-A (422 aa).

The segment at 2-253 is substrate-binding domain; it reads LKAVILIGGP…DRFWSQIKSA (252 aa). GDP-alpha-D-mannose-binding residues include E85 and Q249. The tract at residues 275–422 is hexapeptide repeat domain; sequence LATNTEGGAK…NRSFKNQIIL (148 aa). The tract at residues 358–386 is C-loop; sequence TPSDPNPNDPYAKIDSETLFRDGKLTPSI.

This sequence belongs to the transferase hexapeptide repeat family. Component of the GMPPA-GMPPB mannose-1-phosphate guanylyltransferase complex composed of 4 gmppa subunits and 8 gmppb subunits; the complex is organized into three layers, a central layer made up of 2 gmppa dimers sandwiched between two layers each made up of 2 gmppb dimers.

It functions in the pathway nucleotide-sugar biosynthesis; GDP-alpha-D-mannose biosynthesis; GDP-alpha-D-mannose from alpha-D-mannose 1-phosphate (GTP route): step 1/1. Regulatory subunit of the GMPPA-GMPPB mannose-1-phosphate guanylyltransferase complex; reduces the catalytic activity of GMPPB when part of the complex. Mediates allosteric feedback inhibition of GMPPB catalytic activity upon binding GDP-alpha-D-mannose. Together with GMPPB regulates GDP-alpha-D-mannose levels. One of two paralogs (gmppaa and gmppab) that may have redundant functions. The sequence is that of Mannose-1-phosphate guanylyltransferase regulatory subunit alpha-A (gmppaa) from Danio rerio (Zebrafish).